A 2083-amino-acid polypeptide reads, in one-letter code: Non-reducing polyketide synthase curS2 (2083 aa).

The interval 9–246 (LLFGDVTDPW…NELDIHALQH (238 aa)) is N-terminal acylcarrier protein transacylase domain (SAT). The Ketosynthase family 3 (KS3) domain maps to 366 to 798 (RDGIAIVGMA…GGNACLLLED (433 aa)). Residues C543, H678, and H717 each act as for beta-ketoacyl synthase activity in the active site. The tract at residues 895–1201 (VFVFTGQGSH…THTLQPNTHN (307 aa)) is malonyl-CoA:ACP transacylase (MAT) domain. The active-site For acyl/malonyl transferase activity is the S986. The segment at 1276 to 1415 (AQYLVSKSSS…DPAKTQADWD (140 aa)) is N-terminal hotdog fold. Positions 1276 to 1585 (AQYLVSKSSS…YQELPRVTWK (310 aa)) constitute a PKS/mFAS DH domain. The product template (PT) domain stretch occupies residues 1285-1581 (SPKVQVVFRA…IDLRYQELPR (297 aa)). The C-terminal hotdog fold stretch occupies residues 1437-1585 (GHRMQPEVFY…YQELPRVTWK (149 aa)). Residues 1637-1714 (DFDEGLVDAI…DLRRAFGANK (78 aa)) form the Carrier domain. S1674 bears the O-(pantetheine 4'-phosphoryl)serine mark. Residues 1710 to 1790 (FGANKPKTSK…KMDETDTSPA (81 aa)) form a disordered region. Residues 1718–1736 (SKPQPGSTTPSSSQSSIPS) are compositionally biased toward low complexity. Residues 1745–1754 (MSDTASSLGS) are compositionally biased toward polar residues. The segment covering 1771–1784 (LEPKPNHHLGKMDE) has biased composition (basic and acidic residues). The interval 1811–2058 (MMADGTGTIA…LSVAGDHLDL (248 aa)) is thioesterase (TE) domain. Catalysis depends on H2065, which acts as the For thioesterase activity.

It functions in the pathway mycotoxin biosynthesis. In terms of biological role, non-reducing polyketide synthase; part of the gene cluster that mediates the biosynthesis of 10,11-dehydrocurvularin, a prevalent fungal phytotoxin with heat shock response and immune-modulatory activities. The highly reducing polyketide synthase curS1 is responsible for biosynthesis up to the tetraketide stage. The non-reducing polyketide synthase curS2 then conducts four additional chain extension cycles, producing the unreduced part of the nascent octaketide from C-1 to C-8 in 10,11-dehydrocurvularin. The polypeptide is Non-reducing polyketide synthase curS2 (Aspergillus terreus).